Consider the following 237-residue polypeptide: MRPSKRTPAQTRPITITRNFTAHAEGSVLVEFGETKVLCTASFTEGVPRFLKGQGQGWVTAEYGMLPRSTHSRMDREAARGKQSGRTQEIQRLIGRSLRAAVDMKALGENTIVIDCDVIQADGGTRTAAITGACVAMVDALNWARAKNIIKSNPLKFLIAAVSVGIYKGEAISDLEYLEDSAAETDMNVVMTETGKIIEVQGTAEGEPFSHEELNELLGLAKNSIREIVDVQKSALN.

Residues R86 and 124–126 (GTR) contribute to the phosphate site.

This sequence belongs to the RNase PH family. Homohexameric ring arranged as a trimer of dimers.

It catalyses the reaction tRNA(n+1) + phosphate = tRNA(n) + a ribonucleoside 5'-diphosphate. Phosphorolytic 3'-5' exoribonuclease that plays an important role in tRNA 3'-end maturation. Removes nucleotide residues following the 3'-CCA terminus of tRNAs; can also add nucleotides to the ends of RNA molecules by using nucleoside diphosphates as substrates, but this may not be physiologically important. Probably plays a role in initiation of 16S rRNA degradation (leading to ribosome degradation) during starvation. This chain is Ribonuclease PH, found in Shewanella denitrificans (strain OS217 / ATCC BAA-1090 / DSM 15013).